A 344-amino-acid polypeptide reads, in one-letter code: Interactor of constitutive active ROPs 1 (344 aa).

4 disordered regions span residues 1–74, 92–139, 186–218, and 307–344; these read MPRP…ESQL, EAVK…KETD, HESL…DEMV, and FMDP…KGQK. A compositionally biased stretch (low complexity) spans 19 to 29; sequence SSSSTSDSNHS. A coiled-coil region spans residues 60-108; the sequence is QKKLGGRISDLESQLGQAQEELRLLKEQLANAEAVKKQAQDELHKKSKK. Composition is skewed to basic and acidic residues over residues 93-103, 114-139, and 186-195; these read AVKKQAQDELH, RVEE…KETD, and HESLGKENES. The stretch at 145-273 forms a coiled coil; sequence VEKIAVEEEE…EQWRKAADAA (129 aa). The span at 196–211 shows a compositional bias: polar residues; it reads LKNQLSDSASEISNVK.

The protein belongs to the ICR family. In terms of assembly, homooligomer. Interacts with ARAC3, ARAC4, ARAC8, ARAC11 and SEC3A, but not with ICR2 or EXO70A1. Expressed in mature and germinating pollen. Expressed throughout the embryo but not in the hypophysis and quiescent center (QC). In roots, absent from the QC and the stem cells.

The protein localises to the cell membrane. Its subcellular location is the nucleus. Its function is as follows. Acts as a scaffold, mediating interaction of ROPs with different proteins. Required for primary and adventitious root maintenance, but not for their formation. Promotes the stabilization of ARAC11 on the plasma membrane of the pollen tube initiation site but not the activation of ARAC11. Regulates directionality of polar auxin transport, and is required for the formation of a stable auxin maximum and tip localized auxin gradient during embryogenesis, organogenesis, and meristem activity. Involved in exocytosis and in the recycling of PIN proteins back to the plasma membrane. The polypeptide is Interactor of constitutive active ROPs 1 (ICR1) (Arabidopsis thaliana (Mouse-ear cress)).